Consider the following 264-residue polypeptide: Zinc import ATP-binding protein ZnuC (264 aa).

Positions isoleucine 11–glutamine 226 constitute an ABC transporter domain. Position 43–50 (glycine 43–serine 50) interacts with ATP.

The protein belongs to the ABC transporter superfamily. Zinc importer (TC 3.A.1.15.5) family. As to quaternary structure, the complex is composed of two ATP-binding proteins (ZnuC), two transmembrane proteins (ZnuB) and a solute-binding protein (ZnuA).

It is found in the cell inner membrane. It catalyses the reaction Zn(2+)(out) + ATP(in) + H2O(in) = Zn(2+)(in) + ADP(in) + phosphate(in) + H(+)(in). Part of the ABC transporter complex ZnuABC involved in zinc import. Responsible for energy coupling to the transport system. The chain is Zinc import ATP-binding protein ZnuC from Histophilus somni (strain 129Pt) (Haemophilus somnus).